Reading from the N-terminus, the 428-residue chain is Enolase (428 aa).

Glutamine 163 contacts (2R)-2-phosphoglycerate. Glutamate 205 serves as the catalytic Proton donor. Aspartate 242, glutamate 285, and aspartate 312 together coordinate Mg(2+). (2R)-2-phosphoglycerate-binding residues include lysine 337, arginine 366, serine 367, and lysine 388. Lysine 337 functions as the Proton acceptor in the catalytic mechanism.

This sequence belongs to the enolase family. Requires Mg(2+) as cofactor.

The protein resides in the cytoplasm. It is found in the secreted. Its subcellular location is the cell surface. The catalysed reaction is (2R)-2-phosphoglycerate = phosphoenolpyruvate + H2O. Its pathway is carbohydrate degradation; glycolysis; pyruvate from D-glyceraldehyde 3-phosphate: step 4/5. Functionally, catalyzes the reversible conversion of 2-phosphoglycerate (2-PG) into phosphoenolpyruvate (PEP). It is essential for the degradation of carbohydrates via glycolysis. In Erythrobacter litoralis (strain HTCC2594), this protein is Enolase.